The primary structure comprises 215 residues: Thymidylate kinase (215 aa).

11–18 (GIDGAGKS) contributes to the ATP binding site.

This sequence belongs to the thymidylate kinase family.

The enzyme catalyses dTMP + ATP = dTDP + ADP. Functionally, phosphorylation of dTMP to form dTDP in both de novo and salvage pathways of dTTP synthesis. The chain is Thymidylate kinase from Nitrosomonas europaea (strain ATCC 19718 / CIP 103999 / KCTC 2705 / NBRC 14298).